The primary structure comprises 428 residues: Immunoglobulin superfamily member 11 (428 aa).

Positions 1–22 (MTRRRSALASWLLLSLLGVAAS) are cleaved as a signal peptide. The 114-residue stretch at 23–136 (LEVSESPGSV…DRGGRNIGVT (114 aa)) folds into the Ig-like V-type domain. Residues 23–239 (LEVSESPGSV…LQVISPQPRS (217 aa)) are Extracellular-facing. 2 disulfide bridges follow: Cys44-Cys120 and Cys165-Cys215. An N-linked (GlcNAc...) asparagine glycan is attached at Asn102. Residues 144–234 (PSAPNCQIQG…TCLLDLQVIS (91 aa)) enclose the Ig-like C2-type domain. Residues 240–260 (VGVIAGAVGTGAVLIVICLAL) traverse the membrane as a helical segment. Topologically, residues 261–428 (TSGAFFYWRS…PAQSRAGSLV (168 aa)) are cytoplasmic. Arg375 is modified (omega-N-methylarginine).

N-glycosylated.

The protein localises to the cell membrane. Its function is as follows. Functions as a cell adhesion molecule through homophilic interaction. Stimulates cell growth. This is Immunoglobulin superfamily member 11 (Igsf11) from Rattus norvegicus (Rat).